We begin with the raw amino-acid sequence, 310 residues long: D-alanine--D-alanine ligase (310 aa).

The ATP-grasp domain maps to 107-305 (KKVWQSAGLP…FSALVQSILA (199 aa)). 134–189 (EQLHCQDFVIKPALEGSSVGVSRVKNQEQLAAAIPFAGGARAKIMAEPWIVGRELT) serves as a coordination point for ATP. Mg(2+) is bound by residues D259, E272, and N274.

Belongs to the D-alanine--D-alanine ligase family. Mg(2+) is required as a cofactor. Mn(2+) serves as cofactor.

It is found in the cytoplasm. It carries out the reaction 2 D-alanine + ATP = D-alanyl-D-alanine + ADP + phosphate + H(+). It participates in cell wall biogenesis; peptidoglycan biosynthesis. Cell wall formation. In Dichelobacter nodosus (strain VCS1703A), this protein is D-alanine--D-alanine ligase.